The primary structure comprises 138 residues: Ribulose bisphosphate carboxylase small subunit (138 aa).

This sequence belongs to the RuBisCO small chain family. Heterohexadecamer of 8 large and 8 small subunits.

The protein resides in the plastid. It is found in the chloroplast. Functionally, ruBisCO catalyzes two reactions: the carboxylation of D-ribulose 1,5-bisphosphate, the primary event in carbon dioxide fixation, as well as the oxidative fragmentation of the pentose substrate in the photorespiration process. Both reactions occur simultaneously and in competition at the same active site. Although the small subunit is not catalytic it is essential for maximal activity. In Pyropia haitanensis (Red seaweed), this protein is Ribulose bisphosphate carboxylase small subunit.